Here is a 232-residue protein sequence, read N- to C-terminus: 5'-methylthioadenosine/S-adenosylhomocysteine nucleosidase (232 aa).

Glutamate 12 acts as the Proton acceptor in catalysis. Substrate contacts are provided by residues glycine 78, methionine 153, and 174 to 175 (ME). Aspartate 198 functions as the Proton donor in the catalytic mechanism.

This sequence belongs to the PNP/UDP phosphorylase family. MtnN subfamily.

It carries out the reaction S-adenosyl-L-homocysteine + H2O = S-(5-deoxy-D-ribos-5-yl)-L-homocysteine + adenine. The enzyme catalyses S-methyl-5'-thioadenosine + H2O = 5-(methylsulfanyl)-D-ribose + adenine. The catalysed reaction is 5'-deoxyadenosine + H2O = 5-deoxy-D-ribose + adenine. It functions in the pathway amino-acid biosynthesis; L-methionine biosynthesis via salvage pathway; S-methyl-5-thio-alpha-D-ribose 1-phosphate from S-methyl-5'-thioadenosine (hydrolase route): step 1/2. Functionally, catalyzes the irreversible cleavage of the glycosidic bond in both 5'-methylthioadenosine (MTA) and S-adenosylhomocysteine (SAH/AdoHcy) to adenine and the corresponding thioribose, 5'-methylthioribose and S-ribosylhomocysteine, respectively. Also cleaves 5'-deoxyadenosine, a toxic by-product of radical S-adenosylmethionine (SAM) enzymes, into 5-deoxyribose and adenine. The protein is 5'-methylthioadenosine/S-adenosylhomocysteine nucleosidase of Geobacillus sp. (strain WCH70).